Consider the following 247-residue polypeptide: MLLLSLALTLISAPASDTCDTKDVCIGSPGIPGTPGSHGLPGRDGRDGVKGDPGPPGPMGPPGGMPGLPGRDGLIGAPGVPGERGDKGEPGERGPPGLPAYLDEELQATLHELRHHALQSIGVLSLQGSMKAVGEKIFSTNGQSVNFDAIREVCARAGGRIAVPRSLEENEAIASIVKERNTYAYLGLAEGPTAGDFYYLDGDPVNYTNWYPGEPRGQGREKCVEMYTDGKWNDKNCLQYRLVICEF.

A signal peptide spans 1-15 (MLLLSLALTLISAPA). The Collagen-like domain maps to 27–99 (GSPGIPGTPG…PGERGPPGLP (73 aa)). 4-hydroxyproline is present on residues Pro29, Pro32, Pro35, Pro41, Pro53, Pro56, Pro62, Pro66, and Pro69. Residues 30-100 (GIPGTPGSHG…GERGPPGLPA (71 aa)) are disordered. Basic and acidic residues predominate over residues 41 to 50 (PGRDGRDGVK). A compositionally biased stretch (pro residues) spans 53–64 (PGPPGPMGPPGG). Residues 83-92 (ERGDKGEPGE) show a composition bias toward basic and acidic residues. The C-type lectin domain maps to 132 to 247 (AVGEKIFSTN…LQYRLVICEF (116 aa)). Intrachain disulfides connect Cys154–Cys245 and Cys223–Cys237. Asn206 is a glycosylation site (N-linked (GlcNAc...) asparagine). Positions 214, 216, 233, and 234 each coordinate Ca(2+).

The protein belongs to the SFTPA family. As to quaternary structure, oligomeric complex of 6 set of homotrimers.

Its subcellular location is the secreted. The protein resides in the extracellular space. It localises to the extracellular matrix. It is found in the surface film. Its function is as follows. In presence of calcium ions, it binds to surfactant phospholipids and contributes to lower the surface tension at the air-liquid interface in the alveoli of the mammalian lung and is essential for normal respiration. Enhances the expression of MYO18A/SP-R210 on alveolar macrophages. The sequence is that of Pulmonary surfactant-associated protein A (SFTPA1) from Oryctolagus cuniculus (Rabbit).